Consider the following 333-residue polypeptide: tRNA N6-adenosine threonylcarbamoyltransferase (333 aa).

Fe cation contacts are provided by His111 and His115. Substrate contacts are provided by residues 134–138, Asp167, Gly180, Asp184, and Asn273; that span reads VVSGG. Residue Asp302 participates in Fe cation binding.

The protein belongs to the KAE1 / TsaD family. It depends on Fe(2+) as a cofactor.

It localises to the cytoplasm. The enzyme catalyses L-threonylcarbamoyladenylate + adenosine(37) in tRNA = N(6)-L-threonylcarbamoyladenosine(37) in tRNA + AMP + H(+). In terms of biological role, required for the formation of a threonylcarbamoyl group on adenosine at position 37 (t(6)A37) in tRNAs that read codons beginning with adenine. Is involved in the transfer of the threonylcarbamoyl moiety of threonylcarbamoyl-AMP (TC-AMP) to the N6 group of A37, together with TsaE and TsaB. TsaD likely plays a direct catalytic role in this reaction. The chain is tRNA N6-adenosine threonylcarbamoyltransferase from Anaeromyxobacter sp. (strain Fw109-5).